The primary structure comprises 729 residues: Phosphoribosylformylglycinamidine synthase subunit PurL (729 aa).

Residue His54 is part of the active site. 2 residues coordinate ATP: Tyr57 and Lys96. Glu98 lines the Mg(2+) pocket. Residues Ser99–His102 and Arg121 contribute to the substrate site. The active-site Proton acceptor is His100. Asp122 provides a ligand contact to Mg(2+). Gln245 provides a ligand contact to substrate. Asp273 is a Mg(2+) binding site. Glu317–Gln319 is a binding site for substrate. Asp495 and Gly532 together coordinate ATP. Asn533 is a binding site for Mg(2+). Ser535 lines the substrate pocket.

It belongs to the FGAMS family. In terms of assembly, monomer. Part of the FGAM synthase complex composed of 1 PurL, 1 PurQ and 2 PurS subunits.

Its subcellular location is the cytoplasm. It carries out the reaction N(2)-formyl-N(1)-(5-phospho-beta-D-ribosyl)glycinamide + L-glutamine + ATP + H2O = 2-formamido-N(1)-(5-O-phospho-beta-D-ribosyl)acetamidine + L-glutamate + ADP + phosphate + H(+). It functions in the pathway purine metabolism; IMP biosynthesis via de novo pathway; 5-amino-1-(5-phospho-D-ribosyl)imidazole from N(2)-formyl-N(1)-(5-phospho-D-ribosyl)glycinamide: step 1/2. Functionally, part of the phosphoribosylformylglycinamidine synthase complex involved in the purines biosynthetic pathway. Catalyzes the ATP-dependent conversion of formylglycinamide ribonucleotide (FGAR) and glutamine to yield formylglycinamidine ribonucleotide (FGAM) and glutamate. The FGAM synthase complex is composed of three subunits. PurQ produces an ammonia molecule by converting glutamine to glutamate. PurL transfers the ammonia molecule to FGAR to form FGAM in an ATP-dependent manner. PurS interacts with PurQ and PurL and is thought to assist in the transfer of the ammonia molecule from PurQ to PurL. The polypeptide is Phosphoribosylformylglycinamidine synthase subunit PurL (Staphylococcus epidermidis (strain ATCC 35984 / DSM 28319 / BCRC 17069 / CCUG 31568 / BM 3577 / RP62A)).